The primary structure comprises 177 residues: Adenine phosphoribosyltransferase (177 aa).

The protein belongs to the purine/pyrimidine phosphoribosyltransferase family. As to quaternary structure, homodimer.

The protein resides in the cytoplasm. The enzyme catalyses AMP + diphosphate = 5-phospho-alpha-D-ribose 1-diphosphate + adenine. It functions in the pathway purine metabolism; AMP biosynthesis via salvage pathway; AMP from adenine: step 1/1. Its function is as follows. Catalyzes a salvage reaction resulting in the formation of AMP, that is energically less costly than de novo synthesis. This Rhodococcus opacus (strain B4) protein is Adenine phosphoribosyltransferase.